Reading from the N-terminus, the 100-residue chain is Putative protein adenylyltransferase MJ1379 (100 aa).

A GSX(10)DXD motif motif is present at residues 31-45 (GSYARGEQTEESDID). The Mg(2+) site is built by Asp43, Asp45, and Asp77.

Belongs to the MntA antitoxin family. Probably forms a complex with cognate toxin MJ1380. The cofactor is Mg(2+).

The enzyme catalyses L-tyrosyl-[protein] + ATP = O-(5'-adenylyl)-L-tyrosyl-[protein] + diphosphate. It carries out the reaction O-(5'-adenylyl)-L-tyrosyl-[protein] + ATP = O-[5'-(adenylyl-(5'-&gt;3')-adenylyl)]-L-tyrosyl-[protein] + diphosphate. Probable antitoxin component of a putative type VII toxin-antitoxin (TA) system. Neutralizes cognate toxic MJ1380 by di-AMPylation. The sequence is that of Putative protein adenylyltransferase MJ1379 from Methanocaldococcus jannaschii (strain ATCC 43067 / DSM 2661 / JAL-1 / JCM 10045 / NBRC 100440) (Methanococcus jannaschii).